The following is a 391-amino-acid chain: Glycosyltransferase afumC (391 aa).

This sequence belongs to the afumC glycosyltransferase family.

It functions in the pathway secondary metabolite biosynthesis. Its activity is regulated as follows. Activity is significantly decreased by addition of divalent cations such as Mg(2+), Mn(2+), Zn(2+), Ca(2+), Co(2+), Cu(2+), and Ni(2+); while Fe(2+) has little effect. In terms of biological role, glycosyltransferase; part of the gene cluster that mediates the biosynthesis fumihopaside A, a hopane-type glucoside that enhances the thermotolerance and UV resistance of N.fumigata. The first step of fumihopaside A biosynthesis is performed by the squalene hopane cyclase afumA that catalyzes the cyclization of 3S-oxidosqualene into the hopene 21-beta-H-hopane-3-beta,22-diol. The cytochrome P450 monooxygenase afumB is responsible for both hydroxylation at C-24 and oxidations at C-30 of the afumA product. The glycosyltransferase afumC then catalyzes the glycosylation at C-24, using UDP-D-glucose as a donor, to produce fumihopaside A. AfumC is also able to accept UDP-D-galactose and UDP-D-glucuronic acid as donors to yield minor derivatives. Fumihopaside B, another minor derivative produced, is different from fumihopaside A due to the presence of a double bond between C-22 and C-29. The polypeptide is Glycosyltransferase afumC (Aspergillus fumigatus (strain CBS 144.89 / FGSC A1163 / CEA10) (Neosartorya fumigata)).